The sequence spans 220 residues: Probable chemoreceptor glutamine deamidase CheD (220 aa).

The protein belongs to the CheD family.

The enzyme catalyses L-glutaminyl-[protein] + H2O = L-glutamyl-[protein] + NH4(+). Probably deamidates glutamine residues to glutamate on methyl-accepting chemotaxis receptors (MCPs), playing an important role in chemotaxis. This Cupriavidus metallidurans (strain ATCC 43123 / DSM 2839 / NBRC 102507 / CH34) (Ralstonia metallidurans) protein is Probable chemoreceptor glutamine deamidase CheD.